A 229-amino-acid polypeptide reads, in one-letter code: Capsid protein (229 aa).

At Met1 the chain carries N-acetylmethionine; by host. Gly residues predominate over residues 1–10 (MAQNGTGGGS). Residues 1–28 (MAQNGTGGGSRRPRRGRRNNNNNNSTAR) form a disordered region. Cys64 and Cys106 are joined by a disulfide.

The protein belongs to the cucumovirus capsid protein family.

It is found in the virion. Functionally, capsid protein. Probably binds RNA and plays a role in packaging. The chain is Capsid protein from Canna (Florist's daisy).